An 857-amino-acid chain; its full sequence is Zinc finger protein 574 (857 aa).

14 consecutive C2H2-type zinc fingers follow at residues 15–37 (YVCS…QQSH), 58–80 (YQCL…QELH), 99–121 (YECP…RYTH), 206–228 (YKCS…QGTH), 297–319 (FSCG…QISH), 324–346 (FSCP…LKSH), 352–374 (YLCV…RRSH), 380–401 (FTCE…RRVH), 428–451 (FHCD…RFVH), 457–479 (HKCP…MLTH), 485–507 (YSCT…RLTH), 513–535 (YKCQ…QYVH), 541–563 (YKCN…QYHH), and 569–591 (YKCQ…QLGH). Residues 597-619 (HRCRECGTNFPSVQRLQDHRCSK) form a C2H2-type 15; degenerate zinc finger. C2H2-type zinc fingers lie at residues 628–651 (LECP…AAQH), 681–703 (LECS…RRIH), 709–731 (YPCP…RRLH), 737–759 (FKCD…KRIH), and 765–787 (HSCP…RKLH). Residues 648–678 (AAQHSGNKRSNVSSGKGTPVLPRNKLKGGGG) are disordered. Polar residues predominate over residues 651–663 (HSGNKRSNVSSGK).

The protein belongs to the krueppel C2H2-type zinc-finger protein family.

The protein resides in the nucleus. In terms of biological role, may be involved in transcriptional regulation. This Xenopus tropicalis (Western clawed frog) protein is Zinc finger protein 574 (znf574).